The primary structure comprises 339 residues: Uroporphyrinogen decarboxylase (339 aa).

Residues 21-25 (RQAGR), aspartate 71, tyrosine 147, serine 202, and histidine 315 each bind substrate.

This sequence belongs to the uroporphyrinogen decarboxylase family. As to quaternary structure, homodimer.

It is found in the cytoplasm. It carries out the reaction uroporphyrinogen III + 4 H(+) = coproporphyrinogen III + 4 CO2. Its pathway is porphyrin-containing compound metabolism; protoporphyrin-IX biosynthesis; coproporphyrinogen-III from 5-aminolevulinate: step 4/4. Its function is as follows. Catalyzes the decarboxylation of four acetate groups of uroporphyrinogen-III to yield coproporphyrinogen-III. The polypeptide is Uroporphyrinogen decarboxylase (Helicobacter pylori (strain G27)).